The primary structure comprises 232 residues: 7-cyano-7-deazaguanine synthase (232 aa).

11 to 21 (ASGGMDSATAA) is a binding site for ATP. The Zn(2+) site is built by cysteine 192, cysteine 200, cysteine 203, and cysteine 206.

Belongs to the QueC family. Requires Zn(2+) as cofactor.

The enzyme catalyses 7-carboxy-7-deazaguanine + NH4(+) + ATP = 7-cyano-7-deazaguanine + ADP + phosphate + H2O + H(+). It functions in the pathway purine metabolism; 7-cyano-7-deazaguanine biosynthesis. In terms of biological role, catalyzes the ATP-dependent conversion of 7-carboxy-7-deazaguanine (CDG) to 7-cyano-7-deazaguanine (preQ(0)). The polypeptide is 7-cyano-7-deazaguanine synthase (Haloarcula marismortui (strain ATCC 43049 / DSM 3752 / JCM 8966 / VKM B-1809) (Halobacterium marismortui)).